Reading from the N-terminus, the 302-residue chain is N-acetyl-D-glucosamine kinase (302 aa).

ATP contacts are provided by residues 4-11 and 133-139; these read GFDIGGTK and GGGGLVL. Residues histidine 156, cysteine 176, cysteine 178, and cysteine 183 each contribute to the Zn(2+) site.

Belongs to the ROK (NagC/XylR) family. NagK subfamily.

The enzyme catalyses N-acetyl-D-glucosamine + ATP = N-acetyl-D-glucosamine 6-phosphate + ADP + H(+). Its pathway is cell wall biogenesis; peptidoglycan recycling. Its function is as follows. Catalyzes the phosphorylation of N-acetyl-D-glucosamine (GlcNAc) derived from cell-wall degradation, yielding GlcNAc-6-P. The chain is N-acetyl-D-glucosamine kinase from Salmonella typhi.